We begin with the raw amino-acid sequence, 356 residues long: Heat-inducible transcription repressor HrcA (356 aa).

Belongs to the HrcA family.

In terms of biological role, negative regulator of class I heat shock genes (grpE-dnaK-dnaJ and groELS operons). Prevents heat-shock induction of these operons. The polypeptide is Heat-inducible transcription repressor HrcA (Bartonella henselae (strain ATCC 49882 / DSM 28221 / CCUG 30454 / Houston 1) (Rochalimaea henselae)).